We begin with the raw amino-acid sequence, 225 residues long: NAD(P)H-quinone oxidoreductase subunit K, chloroplastic (225 aa).

Residues cysteine 43, cysteine 44, cysteine 108, and cysteine 139 each coordinate [4Fe-4S] cluster.

The protein belongs to the complex I 20 kDa subunit family. In terms of assembly, NDH is composed of at least 16 different subunits, 5 of which are encoded in the nucleus. It depends on [4Fe-4S] cluster as a cofactor.

Its subcellular location is the plastid. The protein localises to the chloroplast thylakoid membrane. It carries out the reaction a plastoquinone + NADH + (n+1) H(+)(in) = a plastoquinol + NAD(+) + n H(+)(out). The enzyme catalyses a plastoquinone + NADPH + (n+1) H(+)(in) = a plastoquinol + NADP(+) + n H(+)(out). NDH shuttles electrons from NAD(P)H:plastoquinone, via FMN and iron-sulfur (Fe-S) centers, to quinones in the photosynthetic chain and possibly in a chloroplast respiratory chain. The immediate electron acceptor for the enzyme in this species is believed to be plastoquinone. Couples the redox reaction to proton translocation, and thus conserves the redox energy in a proton gradient. In Dioscorea elephantipes (Elephant's foot yam), this protein is NAD(P)H-quinone oxidoreductase subunit K, chloroplastic.